The following is a 95-amino-acid chain: Aspartyl/glutamyl-tRNA(Asn/Gln) amidotransferase subunit C (95 aa).

It belongs to the GatC family. As to quaternary structure, heterotrimer of A, B and C subunits.

The catalysed reaction is L-glutamyl-tRNA(Gln) + L-glutamine + ATP + H2O = L-glutaminyl-tRNA(Gln) + L-glutamate + ADP + phosphate + H(+). It carries out the reaction L-aspartyl-tRNA(Asn) + L-glutamine + ATP + H2O = L-asparaginyl-tRNA(Asn) + L-glutamate + ADP + phosphate + 2 H(+). Allows the formation of correctly charged Asn-tRNA(Asn) or Gln-tRNA(Gln) through the transamidation of misacylated Asp-tRNA(Asn) or Glu-tRNA(Gln) in organisms which lack either or both of asparaginyl-tRNA or glutaminyl-tRNA synthetases. The reaction takes place in the presence of glutamine and ATP through an activated phospho-Asp-tRNA(Asn) or phospho-Glu-tRNA(Gln). This is Aspartyl/glutamyl-tRNA(Asn/Gln) amidotransferase subunit C from Chlorobium phaeobacteroides (strain BS1).